A 123-amino-acid chain; its full sequence is Large ribosomal subunit protein bL21 (123 aa).

Belongs to the bacterial ribosomal protein bL21 family. In terms of assembly, part of the 50S ribosomal subunit. Contacts protein L20.

This protein binds to 23S rRNA in the presence of protein L20. The protein is Large ribosomal subunit protein bL21 of Sinorhizobium fredii (strain NBRC 101917 / NGR234).